Here is a 259-residue protein sequence, read N- to C-terminus: Chloroplastic group IIB intron splicing facilitator CRS2, chloroplastic (259 aa).

A disordered region spans residues 1 to 21 (MSLAVATPASARLSPLTTSSP). The N-terminal 49 residues, 1–49 (MSLAVATPASARLSPLTTSSPEPCRRRRLLLSAAAPLRRTRLRRRIAVV), are a transit peptide targeting the chloroplast. Tyrosine 77 lines the tRNA pocket. The Proton acceptor role is filled by histidine 82. Residues tyrosine 127, asparagine 129, and asparagine 175 each coordinate tRNA.

This sequence belongs to the PTH family. CRS2 subfamily. As to quaternary structure, part of large ribonucleo-protein complexes that include group IIB introns and either CAF1 or CAF2.

It is found in the plastid. The protein localises to the chloroplast stroma. Functionally, required for the splicing of group IIB introns in chloroplasts. The chain is Chloroplastic group IIB intron splicing facilitator CRS2, chloroplastic from Oryza sativa subsp. japonica (Rice).